We begin with the raw amino-acid sequence, 362 residues long: Snurportin-1 (362 aa).

Met1 carries the post-translational modification N-acetylmethionine. Disordered stretches follow at residues 1 to 40 (MEELSQALAGSFSVSQDLNSTAAPHPRLSQYKSKYSSLEQ) and 69 to 90 (DWTGMESEEEEEKKDDEEMDVD). The interval 1–65 (MEELSQALAG…LDYVNHARRL (65 aa)) is necessary for interaction with KPNB1 and m3G-cap U1 and U5 snRNP import receptor activity. The tract at residues 1 to 160 (MEELSQALAG…NTFPSLLPGG (160 aa)) is necessary for interaction with XPO1. In terms of domain architecture, IBB spans 11–73 (SFSVSQDLNS…RLAEDDWTGM (63 aa)). Positions 12-22 (FSVSQDLNSTA) are enriched in polar residues. Residues 69-89 (DWTGMESEEEEEKKDDEEMDV) are compositionally biased toward acidic residues. Ser75 carries the phosphoserine modification. The interaction with m3G-cap structure stretch occupies residues 128-130 (GKR). The interval 210–330 (LHSKLPEEEG…GIMGKLTPRA (121 aa)) is necessary for binding to the m3G-cap structure. Residues 319 to 362 (KEGIMGKLTPRASENGHYELEHLSTPKLKSPPQRPNHPESLMEN) are disordered. The segment covering 332–342 (ENGHYELEHLS) has biased composition (basic and acidic residues).

The protein belongs to the snurportin family. In terms of assembly, component of an import snRNP complex composed of KPNB1, SNUPN, SMN1 and ZNF259. Component of a nuclear export receptor complex composed of KPNB1, Ran, SNUPN and XPO1. Found in a trimeric export complex with SNUPN, Ran and XPO1. Interacts (via IBB domain) with KPNB1; the interaction is direct. Interacts with DDX20, IPO7, SMN1, SNRPB and XPO1. Interacts directly with XPO1. Its interaction with XPO1 and binding to m3G-cap U snRNPs appears to be mutually exclusive. Can form homomers.

The protein resides in the nucleus. Its subcellular location is the cytoplasm. Its function is as follows. Functions as an U snRNP-specific nuclear import adapter. Involved in the trimethylguanosine (m3G)-cap-dependent nuclear import of U snRNPs. Binds specifically to the terminal m3G-cap U snRNAs. The protein is Snurportin-1 (SNUPN) of Bos taurus (Bovine).